Reading from the N-terminus, the 373-residue chain is 5-amino-6-(5-phospho-D-ribitylamino)uracil phosphatase, chloroplastic (373 aa).

Belongs to the HAD-like hydrolase superfamily. DOG/GPP family. As to quaternary structure, homodimer. Mg(2+) is required as a cofactor.

It is found in the plastid. The protein localises to the chloroplast. It carries out the reaction 5-amino-6-(5-phospho-D-ribitylamino)uracil + H2O = 5-amino-6-(D-ribitylamino)uracil + phosphate. Its function is as follows. Catalyzes the dephosphorylation of 5-amino-6-(5-phospho-D-ribitylamino)uracil, also known as ARPP, but has no activity toward flavin mononucleotide (FMN). The sequence is that of 5-amino-6-(5-phospho-D-ribitylamino)uracil phosphatase, chloroplastic from Arabidopsis thaliana (Mouse-ear cress).